A 284-amino-acid chain; its full sequence is UPF0354 protein SERP1303 (284 aa).

The protein belongs to the UPF0354 family.

The protein is UPF0354 protein SERP1303 of Staphylococcus epidermidis (strain ATCC 35984 / DSM 28319 / BCRC 17069 / CCUG 31568 / BM 3577 / RP62A).